The chain runs to 129 residues: Small ribosomal subunit protein uS11c (129 aa).

It belongs to the universal ribosomal protein uS11 family. In terms of assembly, part of the 30S ribosomal subunit.

It is found in the plastid. Its subcellular location is the chloroplast. The polypeptide is Small ribosomal subunit protein uS11c (Euglena gracilis).